Here is a 397-residue protein sequence, read N- to C-terminus: Putative 8-amino-7-oxononanoate synthase (397 aa).

A substrate-binding site is contributed by R22. Pyridoxal 5'-phosphate is bound at residue 109–110 (GW). H139 contacts substrate. Pyridoxal 5'-phosphate-binding positions include S187, 212 to 215 (DEAH), and 241 to 244 (TFSK). The residue at position 244 (K244) is an N6-(pyridoxal phosphate)lysine. Residue T358 participates in substrate binding.

The protein belongs to the class-II pyridoxal-phosphate-dependent aminotransferase family. BioF subfamily. Homodimer. Pyridoxal 5'-phosphate is required as a cofactor.

It catalyses the reaction 6-carboxyhexanoyl-[ACP] + L-alanine + H(+) = (8S)-8-amino-7-oxononanoate + holo-[ACP] + CO2. The protein operates within cofactor biosynthesis; biotin biosynthesis. Functionally, catalyzes the decarboxylative condensation of pimeloyl-[acyl-carrier protein] and L-alanine to produce 8-amino-7-oxononanoate (AON), [acyl-carrier protein], and carbon dioxide. The sequence is that of Putative 8-amino-7-oxononanoate synthase (bioF) from Bordetella pertussis (strain Tohama I / ATCC BAA-589 / NCTC 13251).